The chain runs to 156 residues: Ribosomal RNA large subunit methyltransferase H (156 aa).

S-adenosyl-L-methionine contacts are provided by residues leucine 73, glycine 104, and 123–128; that span reads LSSLTL.

It belongs to the RNA methyltransferase RlmH family. As to quaternary structure, homodimer.

The protein localises to the cytoplasm. It catalyses the reaction pseudouridine(1915) in 23S rRNA + S-adenosyl-L-methionine = N(3)-methylpseudouridine(1915) in 23S rRNA + S-adenosyl-L-homocysteine + H(+). Specifically methylates the pseudouridine at position 1915 (m3Psi1915) in 23S rRNA. The polypeptide is Ribosomal RNA large subunit methyltransferase H (Neisseria gonorrhoeae (strain ATCC 700825 / FA 1090)).